The primary structure comprises 661 residues: Kyphoscoliosis peptidase (661 aa).

The segment covering 28-41 (GTLSDQQANPSSLL) has biased composition (polar residues). Disordered regions lie at residues 28–47 (GTLSDQQANPSSLLQRGGGF) and 115–136 (QGDKNGNTRPRQPGGKDAHAYP). Residues Cys225, His267, and Asp282 contribute to the active site.

This sequence belongs to the transglutaminase-like superfamily. As to quaternary structure, interacts with IGFN1 and FLNC. As to expression, highly expressed in skeletal muscle.

Its subcellular location is the cytoplasm. It localises to the cytoskeleton. The protein resides in the myofibril. The protein localises to the sarcomere. It is found in the z line. Functionally, probable cytoskeleton-associated protease required for normal muscle growth. Involved in function, maturation and stabilization of the neuromuscular junction. May act by cleaving muscle-specific proteins such as FLNC. This Homo sapiens (Human) protein is Kyphoscoliosis peptidase.